The chain runs to 770 residues: Rho guanine nucleotide exchange factor 38 (770 aa).

Positions 33-88 (KTDTVVDSSVSGDHSGSLRRSQSDRTEYNQKLQEKMTPQAECSSAETPTPEDEQQV) are disordered. Residue Thr-34 is modified to Phosphothreonine. Residues 37–47 (VVDSSVSGDHS) show a composition bias toward low complexity. Basic and acidic residues predominate over residues 53-66 (SQSDRTEYNQKLQE). A DH domain is found at 94-285 (KRAKIIRELI…KDINVNINEL (192 aa)). Residues 327 to 542 (LKILTRGESQ…VHSLTFVKEN (216 aa)) enclose the BAR domain. SH3 domains lie at 581-644 (GAEE…PHNP) and 706-769 (VDEQ…KMTY).

May act as a guanine-nucleotide releasing factor. This Mus musculus (Mouse) protein is Rho guanine nucleotide exchange factor 38 (Arhgef38).